Consider the following 357-residue polypeptide: SPbeta prophage-derived pesticidal crystal protein-like YokG (357 aa).

The protein belongs to the cry6A endotoxin family.

The polypeptide is SPbeta prophage-derived pesticidal crystal protein-like YokG (yokG) (Bacillus subtilis (strain 168)).